Here is a 235-residue protein sequence, read N- to C-terminus: Glucosamine-6-phosphate deaminase (235 aa).

Asp-62 (proton acceptor; for enolization step) is an active-site residue. The active-site For ring-opening step is the Asn-128. His-130 (proton acceptor; for ring-opening step) is an active-site residue. The active-site For ring-opening step is Glu-135.

The protein belongs to the glucosamine/galactosamine-6-phosphate isomerase family. NagB subfamily.

The catalysed reaction is alpha-D-glucosamine 6-phosphate + H2O = beta-D-fructose 6-phosphate + NH4(+). Its pathway is amino-sugar metabolism; N-acetylneuraminate degradation; D-fructose 6-phosphate from N-acetylneuraminate: step 5/5. Its function is as follows. Catalyzes the reversible isomerization-deamination of glucosamine 6-phosphate (GlcN6P) to form fructose 6-phosphate (Fru6P) and ammonium ion. The chain is Glucosamine-6-phosphate deaminase from Lactococcus lactis subsp. lactis (strain IL1403) (Streptococcus lactis).